A 186-amino-acid polypeptide reads, in one-letter code: Transcriptional repressor NrdR (186 aa).

Residues 1–24 (MRCPYCGGLDTQVKDSRPSDDASA) are disordered. A zinc finger spans residues 3–34 (CPYCGGLDTQVKDSRPSDDASAIRRRRICPDC). The span at 12 to 24 (QVKDSRPSDDASA) shows a compositional bias: basic and acidic residues. Positions 49 to 139 (LTVVKRSGRR…VYKNFREARD (91 aa)) constitute an ATP-cone domain. Positions 146–186 (RLNGAGRPGGEPEPPDEAAPGPAAAPGEGGEAPARRARSRA) are disordered.

It belongs to the NrdR family. Requires Zn(2+) as cofactor.

In terms of biological role, negatively regulates transcription of bacterial ribonucleotide reductase nrd genes and operons by binding to NrdR-boxes. In Methylobacterium sp. (strain 4-46), this protein is Transcriptional repressor NrdR.